The sequence spans 202 residues: Ribonuclease HII (202 aa).

The 190-residue stretch at 12 to 201 folds into the RNase H type-2 domain; the sequence is LLIAGVDEAG…VRQLKLFIPE (190 aa). The a divalent metal cation site is built by D18, E19, and D110.

The protein belongs to the RNase HII family. It depends on Mn(2+) as a cofactor. Requires Mg(2+) as cofactor.

It localises to the cytoplasm. It carries out the reaction Endonucleolytic cleavage to 5'-phosphomonoester.. Its function is as follows. Endonuclease that specifically degrades the RNA of RNA-DNA hybrids. This Coxiella burnetii (strain CbuG_Q212) (Coxiella burnetii (strain Q212)) protein is Ribonuclease HII.